We begin with the raw amino-acid sequence, 805 residues long: MDAATPGNGGIISDVVFVIEGTANLGPYFESLRKHYLLPAIEYFNGGPPAETDFGGDYGGTQYSLVVFNTVDCAPESYVQCHAPTSSAYEFVQWLDSIRFMGGGGESCSLIAEGLSTALQLFDDFKKMREQIGQTHKVCILICNSPPYLLPAVESTTYSGYTTENLVQKIGERGIHFSVISPRKLPALRTLFEKAMPVGLIEPQPKDYSQDPRHMILVRGMVLPVGGATSVPGVIPPKQPISQPPLPVVPPQIANAPSHQLPPVQPPYMQVPQQNTLTTAHAAAQSAVEAAKNQKNNLPNRFPLPNLNQMPPTSAVGTPFNQPPPPAMPQNTSVPKMVTSTASLMTPASQPSLVTTVTTGPGPAPVQLQQQGAQQQPVPPSMPITGAAGGVQAPQPSQPQIGTAQLPCTQTPVNGNKLLAWSGVLEWQEKPRSVSVDNNAKLTRSLPCQVYVNPGENLKTDQWPQKLIMQLIPQQLLTTLGPLFRNSRMVQFHFTNKDLESLKGLYRIMGSGFQAGCVHFPHTTPCEVRVLMLLYSSKKKIFMGLIPNDQSGFVNGIRQVITNHKQVQMQKIDQQRNMGAGQAVGTGNVPANTQAFLQKQPGALPVAQAVPQQMQGQQVAPGMPSISQVTMMDEQQRTQNLLHIRVQQPQQAASQAPPQATQTTVQAPGQPQNPQPGAMLRPQNPGANPQLRNLLLSQQPPQTSVPQTQQPLHHMQQAAQGMLPHQAMGQQMQHQAPGQQQLQLPGQTLMHQAPAQQWGNQMQQRAPIPGTLMMSAGPRGPVPQQGLQQVQAQSVMEDDILMDLI.

Disordered regions lie at residues 308-332 and 647-691; these read NQMPPTSAVGTPFNQPPPPAMPQNT and QQPQ…NPQL. A compositionally biased stretch (low complexity) spans 647–678; it reads QQPQQAASQAPPQATQTTVQAPGQPQNPQPGA. The short motif at 691–695 is the LXXLL motif element; it reads LRNLL.

Belongs to the Mediator complex subunit 25 family. As to quaternary structure, component of the Mediator complex.

Its subcellular location is the nucleus. Its function is as follows. Component of the Mediator complex, a coactivator involved in the regulated transcription of nearly all RNA polymerase II-dependent genes. Mediator functions as a bridge to convey information from gene-specific regulatory proteins to the basal RNA polymerase II transcription machinery. Mediator is recruited to promoters by direct interactions with regulatory proteins and serves as a scaffold for the assembly of a functional preinitiation complex with RNA polymerase II and the general transcription factors. The sequence is that of Mediator of RNA polymerase II transcription subunit 25 (med25) from Xenopus tropicalis (Western clawed frog).